A 311-amino-acid chain; its full sequence is tRNA dimethylallyltransferase (311 aa).

16-23 (GATASGKS) provides a ligand contact to ATP. 18–23 (TASGKS) serves as a coordination point for substrate. Interaction with substrate tRNA stretches follow at residues 41 to 44 (DSRQ) and 165 to 169 (QRLIR).

This sequence belongs to the IPP transferase family. In terms of assembly, monomer. Mg(2+) serves as cofactor.

The catalysed reaction is adenosine(37) in tRNA + dimethylallyl diphosphate = N(6)-dimethylallyladenosine(37) in tRNA + diphosphate. Catalyzes the transfer of a dimethylallyl group onto the adenine at position 37 in tRNAs that read codons beginning with uridine, leading to the formation of N6-(dimethylallyl)adenosine (i(6)A). The sequence is that of tRNA dimethylallyltransferase from Chlorobium chlorochromatii (strain CaD3).